Here is a 453-residue protein sequence, read N- to C-terminus: Phosphoglucosamine mutase (453 aa).

Ser105 functions as the Phosphoserine intermediate in the catalytic mechanism. Residues Ser105, Asp244, Asp246, and Asp248 each contribute to the Mg(2+) site. A Phosphoserine modification is found at Ser105.

Belongs to the phosphohexose mutase family. It depends on Mg(2+) as a cofactor. In terms of processing, activated by phosphorylation.

It carries out the reaction alpha-D-glucosamine 1-phosphate = D-glucosamine 6-phosphate. Its function is as follows. Catalyzes the conversion of glucosamine-6-phosphate to glucosamine-1-phosphate. The polypeptide is Phosphoglucosamine mutase (Blochmanniella pennsylvanica (strain BPEN)).